The chain runs to 309 residues: Methionyl-tRNA formyltransferase (309 aa).

109–112 (SLLP) is a (6S)-5,6,7,8-tetrahydrofolate binding site.

It belongs to the Fmt family.

It catalyses the reaction L-methionyl-tRNA(fMet) + (6R)-10-formyltetrahydrofolate = N-formyl-L-methionyl-tRNA(fMet) + (6S)-5,6,7,8-tetrahydrofolate + H(+). Attaches a formyl group to the free amino group of methionyl-tRNA(fMet). The formyl group appears to play a dual role in the initiator identity of N-formylmethionyl-tRNA by promoting its recognition by IF2 and preventing the misappropriation of this tRNA by the elongation apparatus. The polypeptide is Methionyl-tRNA formyltransferase (Clostridium perfringens (strain 13 / Type A)).